The sequence spans 258 residues: Type III pantothenate kinase (258 aa).

Position 6 to 13 (6 to 13) interacts with ATP; sequence DVGNTNTV. Substrate-binding positions include Tyr100 and 107–110; that span reads GADR. The active-site Proton acceptor is Asp109. Asp129 contributes to the K(+) binding site. Thr132 serves as a coordination point for ATP. Position 184 (Thr184) interacts with substrate.

This sequence belongs to the type III pantothenate kinase family. Homodimer. NH4(+) serves as cofactor. K(+) is required as a cofactor.

The protein resides in the cytoplasm. It carries out the reaction (R)-pantothenate + ATP = (R)-4'-phosphopantothenate + ADP + H(+). Its pathway is cofactor biosynthesis; coenzyme A biosynthesis; CoA from (R)-pantothenate: step 1/5. Its function is as follows. Catalyzes the phosphorylation of pantothenate (Pan), the first step in CoA biosynthesis. In Geobacillus kaustophilus (strain HTA426), this protein is Type III pantothenate kinase.